We begin with the raw amino-acid sequence, 465 residues long: Biotin biosynthesis bifunctional protein BioCD (465 aa).

The interval 1–254 (MTPFLPDRSI…AYGQWRKPRG (254 aa)) is malonyl-ACP O-methyltransferase. Residues aspartate 234 and 263-268 (GVGKTL) contribute to the ATP site. The tract at residues 255-465 (VFVTGTDTGV…DSLLSSNASR (211 aa)) is DTB synthetase. Residue threonine 267 coordinates Mg(2+). The active site involves lysine 283. Threonine 287 is a binding site for substrate. Residues aspartate 295, 351 to 354 (EGAG), and 435 to 437 (PQL) each bind ATP. Residues aspartate 295 and glutamate 351 each coordinate Mg(2+).

It in the N-terminal section; belongs to the methyltransferase superfamily. In the C-terminal section; belongs to the dethiobiotin synthetase family. It depends on Mg(2+) as a cofactor.

It is found in the cytoplasm. The enzyme catalyses (7R,8S)-7,8-diammoniononanoate + CO2 + ATP = (4R,5S)-dethiobiotin + ADP + phosphate + 3 H(+). The catalysed reaction is malonyl-[ACP] + S-adenosyl-L-methionine = malonyl-[ACP] methyl ester + S-adenosyl-L-homocysteine. It functions in the pathway cofactor biosynthesis; biotin biosynthesis; biotin from 7,8-diaminononanoate: step 1/2. It participates in cofactor biosynthesis; biotin biosynthesis. Its function is as follows. Converts the free carboxyl group of a malonyl-thioester to its methyl ester by transfer of a methyl group from S-adenosyl-L-methionine (SAM). It allows synthesis of pimeloyl-ACP via the fatty acid synthetic pathway. Catalyzes a mechanistically unusual reaction, the ATP-dependent insertion of CO2 between the N7 and N8 nitrogen atoms of 7,8-diaminopelargonic acid (DAPA, also called 7,8-diammoniononanoate) to form a ureido ring. The chain is Biotin biosynthesis bifunctional protein BioCD from Bordetella avium (strain 197N).